Consider the following 183-residue polypeptide: MSPERRPVEIRPATAADMAAVCDIVNHYIETSTVNFRTEPQTPQEWIDDLERLQDRYPWLVAEVEGVVAGIAYAGPWKARNAYDWTVESTVYVSHRHQRLGLGSTLYTHLLKSMEAQGFKSVVAVIGLPNDPSVRLHEALGYTARGTLRAAGYKHGGWHDVGFWQRDFELPAPPRPVRPVTQI.

Residues 8 to 169 (VEIRPATAAD…DVGFWQRDFE (162 aa)) form the N-acetyltransferase domain. Residues 91–93 (VYV), 99–104 (RLGLGS), and Asn-130 each bind acetyl-CoA.

It belongs to the acetyltransferase family. PAT/BAR subfamily.

It catalyses the reaction phosphinothricin + acetyl-CoA = N-acetylphosphinothricin + CoA + H(+). Functionally, inactivates phosphinothricin (PPT) by transfer of an acetyl group from acetyl CoA. This enzyme is an effector of phosphinothricin tripeptide (PTT or bialaphos) resistance. The protein is Phosphinothricin N-acetyltransferase of Streptomyces viridochromogenes (strain DSM 40736 / JCM 4977 / BCRC 1201 / Tue 494).